Reading from the N-terminus, the 972-residue chain is Fibroblast growth factor receptor (972 aa).

Positions 1–43 (MSLPRCPRTRTVMFSRTLTRCYPQRTLWIAILCVICSWTLSTA) are cleaved as a signal peptide. The Extracellular segment spans residues 44-547 (GATTIRDKEV…NNMQPTSKTQ (504 aa)). The region spanning 57 to 152 (APQDLTAIPV…YIEASGTPPI (96 aa)) is the Fibronectin type-III domain. Asparagine 109, asparagine 121, asparagine 191, asparagine 203, asparagine 239, asparagine 272, asparagine 315, asparagine 390, asparagine 398, asparagine 419, asparagine 422, and asparagine 460 each carry an N-linked (GlcNAc...) asparagine glycan. The Ig-like C2-type 1 domain maps to 150–242 (PPIPPTLRRN…GQPIHVNFTL (93 aa)). Cysteines 176 and 226 form a disulfide. 2 consecutive Ig-like C2-type domains span residues 282-374 (PRFT…YDVK) and 383-517 (PIMS…AYLD). Residues cysteine 306 and cysteine 358 are joined by a disulfide bond. A disulfide bridge connects residues cysteine 403 and cysteine 501. A helical membrane pass occupies residues 548–568 (LIIFSVVGFVVVLILVTCIAI). Topologically, residues 569–972 (LCKQTQVRHR…QTRDCCPYAN (404 aa)) are cytoplasmic. Positions 639–925 (LTVGKTIGEG…ISVSSNQDYL (287 aa)) constitute a Protein kinase domain. ATP-binding positions include 645-653 (IGEGAFGKV) and lysine 673. The active-site Proton acceptor is the aspartate 781. Tyrosine 812 carries the phosphotyrosine; by autocatalysis modification.

It belongs to the protein kinase superfamily. Tyr protein kinase family. Fibroblast growth factor receptor subfamily.

It is found in the membrane. It catalyses the reaction L-tyrosyl-[protein] + ATP = O-phospho-L-tyrosyl-[protein] + ADP + H(+). Its function is as follows. Receptor for basic fibroblast growth factor. This Strongylocentrotus purpuratus (Purple sea urchin) protein is Fibroblast growth factor receptor (FGFR).